We begin with the raw amino-acid sequence, 430 residues long: Trigger factor (430 aa).

Residues 163-248 (GDVVDVDYKG…LNSIKTSILP (86 aa)) enclose the PPIase FKBP-type domain.

It belongs to the FKBP-type PPIase family. Tig subfamily.

The protein resides in the cytoplasm. It carries out the reaction [protein]-peptidylproline (omega=180) = [protein]-peptidylproline (omega=0). Functionally, involved in protein export. Acts as a chaperone by maintaining the newly synthesized protein in an open conformation. Functions as a peptidyl-prolyl cis-trans isomerase. This is Trigger factor from Lawsonia intracellularis (strain PHE/MN1-00).